The primary structure comprises 89 residues: Small ribosomal subunit protein uS15 (89 aa).

Belongs to the universal ribosomal protein uS15 family. In terms of assembly, part of the 30S ribosomal subunit. Forms a bridge to the 50S subunit in the 70S ribosome, contacting the 23S rRNA.

In terms of biological role, one of the primary rRNA binding proteins, it binds directly to 16S rRNA where it helps nucleate assembly of the platform of the 30S subunit by binding and bridging several RNA helices of the 16S rRNA. Functionally, forms an intersubunit bridge (bridge B4) with the 23S rRNA of the 50S subunit in the ribosome. This Chlorobaculum parvum (strain DSM 263 / NCIMB 8327) (Chlorobium vibrioforme subsp. thiosulfatophilum) protein is Small ribosomal subunit protein uS15.